The following is a 239-amino-acid chain: 1-(5-phosphoribosyl)-5-[(5-phosphoribosylamino)methylideneamino] imidazole-4-carboxamide isomerase (239 aa).

Asp8 (proton acceptor) is an active-site residue. The active-site Proton donor is the Asp129.

This sequence belongs to the HisA/HisF family.

The protein resides in the cytoplasm. The enzyme catalyses 1-(5-phospho-beta-D-ribosyl)-5-[(5-phospho-beta-D-ribosylamino)methylideneamino]imidazole-4-carboxamide = 5-[(5-phospho-1-deoxy-D-ribulos-1-ylimino)methylamino]-1-(5-phospho-beta-D-ribosyl)imidazole-4-carboxamide. The protein operates within amino-acid biosynthesis; L-histidine biosynthesis; L-histidine from 5-phospho-alpha-D-ribose 1-diphosphate: step 4/9. The chain is 1-(5-phosphoribosyl)-5-[(5-phosphoribosylamino)methylideneamino] imidazole-4-carboxamide isomerase from Bacillus cereus (strain B4264).